Consider the following 121-residue polypeptide: MEKERIELRLDYVLNSGKKTGKSYESILKLIAETFGVQLTTTIHNRNISYYLIAITSPAKLAILINYLNEYSLFTSKYLNFQDFSNCVNMMLNKEHLTISGREKITILKESMNNKRTYGII.

Belongs to the LAGLIDADG endonuclease family.

The protein resides in the mitochondrion. Mitochondrial DNA endonuclease involved in intron homing. In Mycosarcoma maydis (Corn smut fungus), this protein is Probable intron-encoded DNA endonuclease aI1 (aI1).